The following is a 295-amino-acid chain: F-box only protein 6 (295 aa).

The F-box domain occupies 1–48 (MVHINELPENILLELFIHIPAPQLLRNCRLVCRLWRDLIDVVSLWKRK). In terms of domain architecture, FBA spans 69–250 (FYILCSLQRN…VTNSSIIISH (182 aa)). A phosphoserine mark is found at Ser249 and Ser276. Thr280 carries the phosphothreonine modification.

As to quaternary structure, interacts with CHEK1 and CUL1. Part of a SCF (SKP1-cullin-F-box) protein ligase complex. Interacts with VCP. As to expression, present in liver and kidney (at protein level). Widely expressed.

The protein localises to the cytoplasm. Its pathway is protein modification; protein ubiquitination. Functionally, substrate-recognition component of some SCF (SKP1-CUL1-F-box protein)-type E3 ubiquitin ligase complexes. Involved in DNA damage response by specifically recognizing activated CHEK1 (phosphorylated on 'Ser-345'), promoting its ubiquitination and degradation. Ubiquitination of CHEK1 is required to ensure that activated CHEK1 does not accumulate as cells progress through S phase, or when replication forks encounter transient impediments during normal DNA replication. Involved in endoplasmic reticulum-associated degradation pathway (ERAD) for misfolded lumenal proteins by recognizing and binding sugar chains on unfolded glycoproteins that are retrotranslocated into the cytosol and promoting their ubiquitination and subsequent degradation. Able to recognize and bind denatured glycoproteins, which are modified with not only high-mannose but also complex-type oligosaccharides. Also recognizes sulfated glycans. The polypeptide is F-box only protein 6 (Fbxo6) (Mus musculus (Mouse)).